A 656-amino-acid chain; its full sequence is Leucine aminopeptidase 2 (656 aa).

Substrate contacts are provided by residues 173-175 (QLE) and 302-307 (PYGGME). His-331 contacts Zn(2+). The Proton acceptor role is filled by Glu-332. Positions 335 and 354 each coordinate Zn(2+). Residue Tyr-420 is the Proton donor of the active site.

The protein belongs to the peptidase M1 family. Zn(2+) serves as cofactor.

It localises to the cytoplasm. The protein localises to the nucleus. It catalyses the reaction an epoxide + H2O = an ethanediol. Aminopeptidase that preferentially cleaves di- and tripeptides. Also has low epoxide hydrolase activity (in vitro). Can hydrolyze the epoxide leukotriene LTA(4) but it forms preferentially 5,6-dihydroxy-7,9,11,14-eicosatetraenoic acid rather than the cytokine leukotriene B(4) as the product compared to the homologous mammalian enzyme (in vitro). This is Leucine aminopeptidase 2 from Vanderwaltozyma polyspora (strain ATCC 22028 / DSM 70294 / BCRC 21397 / CBS 2163 / NBRC 10782 / NRRL Y-8283 / UCD 57-17) (Kluyveromyces polysporus).